A 1058-amino-acid chain; its full sequence is Carbamoyl phosphate synthase large chain (1058 aa).

A carboxyphosphate synthetic domain region spans residues 1–401 (MPKRTDIQKI…SLLKACRSLE (401 aa)). Positions 129, 169, 175, 176, 208, 210, 215, 241, 242, 243, 284, and 298 each coordinate ATP. The region spanning 133-327 (KQLMEELEQP…IAKLAAKIAV (195 aa)) is the ATP-grasp 1 domain. Positions 284, 298, and 300 each coordinate Mg(2+). Mn(2+)-binding residues include glutamine 284, glutamate 298, and asparagine 300. The tract at residues 402–546 (IGVHHNEIPE…YSTYGWENES (145 aa)) is oligomerization domain. Positions 547–929 (IRSDKESVLV…ALYKAFEASY (383 aa)) are carbamoyl phosphate synthetic domain. Residues 671–861 (EQALKELDIP…MAQVATKLIL (191 aa)) enclose the ATP-grasp 2 domain. 10 residues coordinate ATP: arginine 707, serine 746, isoleucine 748, glutamate 752, glycine 777, valine 778, histidine 779, serine 780, glutamine 820, and glutamate 832. Residues glutamine 820, glutamate 832, and asparagine 834 each coordinate Mg(2+). Glutamine 820, glutamate 832, and asparagine 834 together coordinate Mn(2+). Positions 930–1058 (LHLPTFGNVV…ESRSFVTEAI (129 aa)) constitute an MGS-like domain. Positions 930 to 1058 (LHLPTFGNVV…ESRSFVTEAI (129 aa)) are allosteric domain.

Belongs to the CarB family. As to quaternary structure, composed of two chains; the small (or glutamine) chain promotes the hydrolysis of glutamine to ammonia, which is used by the large (or ammonia) chain to synthesize carbamoyl phosphate. Tetramer of heterodimers (alpha,beta)4. Mg(2+) is required as a cofactor. Requires Mn(2+) as cofactor.

It catalyses the reaction hydrogencarbonate + L-glutamine + 2 ATP + H2O = carbamoyl phosphate + L-glutamate + 2 ADP + phosphate + 2 H(+). The enzyme catalyses hydrogencarbonate + NH4(+) + 2 ATP = carbamoyl phosphate + 2 ADP + phosphate + 2 H(+). Its pathway is amino-acid biosynthesis; L-arginine biosynthesis; carbamoyl phosphate from bicarbonate: step 1/1. It participates in pyrimidine metabolism; UMP biosynthesis via de novo pathway; (S)-dihydroorotate from bicarbonate: step 1/3. Large subunit of the glutamine-dependent carbamoyl phosphate synthetase (CPSase). CPSase catalyzes the formation of carbamoyl phosphate from the ammonia moiety of glutamine, carbonate, and phosphate donated by ATP, constituting the first step of 2 biosynthetic pathways, one leading to arginine and/or urea and the other to pyrimidine nucleotides. The large subunit (synthetase) binds the substrates ammonia (free or transferred from glutamine from the small subunit), hydrogencarbonate and ATP and carries out an ATP-coupled ligase reaction, activating hydrogencarbonate by forming carboxy phosphate which reacts with ammonia to form carbamoyl phosphate. The polypeptide is Carbamoyl phosphate synthase large chain (Streptococcus pneumoniae (strain JJA)).